Reading from the N-terminus, the 114-residue chain is T cell receptor beta variable 6-4 (114 aa).

Positions 1–21 (MSIRLLCCVAFSLLWAGPVTA) are cleaved as a signal peptide. The region spanning 22 to 114 (GITQAPTSQI…TSVYFCASSD (93 aa)) is the Ig-like domain. Cys42 and Cys110 are joined by a disulfide.

In terms of assembly, alpha-beta TR is a heterodimer composed of an alpha and beta chain; disulfide-linked. The alpha-beta TR is associated with the transmembrane signaling CD3 coreceptor proteins to form the TR-CD3 (TcR or TCR). The assembly of alpha-beta TR heterodimers with CD3 occurs in the endoplasmic reticulum where a single alpha-beta TR heterodimer associates with one CD3D-CD3E heterodimer, one CD3G-CD3E heterodimer and one CD247 homodimer forming a stable octameric structure. CD3D-CD3E and CD3G-CD3E heterodimers preferentially associate with TR alpha and TR beta chains, respectively. The association of the CD247 homodimer is the last step of TcR assembly in the endoplasmic reticulum and is required for transport to the cell surface.

The protein localises to the cell membrane. Its function is as follows. V region of the variable domain of T cell receptor (TR) beta chain that participates in the antigen recognition. Alpha-beta T cell receptors are antigen specific receptors which are essential to the immune response and are present on the cell surface of T lymphocytes. Recognize peptide-major histocompatibility (MH) (pMH) complexes that are displayed by antigen presenting cells (APC), a prerequisite for efficient T cell adaptive immunity against pathogens. Binding of alpha-beta TR to pMH complex initiates TR-CD3 clustering on the cell surface and intracellular activation of LCK that phosphorylates the ITAM motifs of CD3G, CD3D, CD3E and CD247 enabling the recruitment of ZAP70. In turn ZAP70 phosphorylates LAT, which recruits numerous signaling molecules to form the LAT signalosome. The LAT signalosome propagates signal branching to three major signaling pathways, the calcium, the mitogen-activated protein kinase (MAPK) kinase and the nuclear factor NF-kappa-B (NF-kB) pathways, leading to the mobilization of transcription factors that are critical for gene expression and essential for T cell growth and differentiation. The T cell repertoire is generated in the thymus, by V-(D)-J rearrangement. This repertoire is then shaped by intrathymic selection events to generate a peripheral T cell pool of self-MH restricted, non-autoaggressive T cells. Post-thymic interaction of alpha-beta TR with the pMH complexes shapes TR structural and functional avidity. The chain is T cell receptor beta variable 6-4 from Homo sapiens (Human).